The primary structure comprises 696 residues: MCGIFGYINYLVERDRGYILKTLVKGLKRLEYRGYDSSGCAVDGDEGEDFIMFKEVGNVSKLEASIKGSNVNKSTKFINHCAISHTRWATHGIPSPINCHPQRSDPHSEFIVVHNGILTNYRELRTVLESRGMVFESETDTECVAKLAKFIYDTTPGVDFTSLAKLVFRELEGAYALLIKSSHYPGEVVATRRGSPLIVGVKSEQKLKVDFVDVEFPEPAEGLPGTPKPTSLHPVFSNPATNGMLRGDKPDLLHRAQSRAFVSGEGVPGPIEYFFASDATPIIEYTKRVMFLEDDDIAHVRDGELHVHRLRREGGGSTTRTIETLEMEIASVMKGNYDHYMIKEICEQPDSLLNTMRGRVNFVNRLVTLGGLESYYDIIRKSRRLIFVACGTSYHSCVAVRPLFEELTNIPVVVELASDFVDRCPSVFRDDTFIFVSQSGETADSLLALQYTLENGALAIGVVNCVGSSISRKTHCGVHINAGPEICVASTKAYTSQYVALVLMALYLSRDSVSRLERRNEIIDGLAEIGEKVQETLHLNAAIKQTAIEQLINKDKMLIIGRGYHYATALEGALKVKEISYTHAEGVLAGELKHGVLALVDNDMPIVMLLPDDYNFPKAWNAFEQVRARGGKPIIITDKKLDNLEGFTIIKVPKTVDCLQGILNVIPFQLLSYWLAVKRGHNVDQPRNLAKSVTVE.

The active-site For GATase activity is C2. Residues 2-303 (CGIFGYINYL…DDDIAHVRDG (302 aa)) form the Glutamine amidotransferase type-2 domain. 2 SIS domains span residues 375-514 (YYDI…DSVS) and 547-686 (AIEQ…VDQP).

The catalysed reaction is D-fructose 6-phosphate + L-glutamine = D-glucosamine 6-phosphate + L-glutamate. Its pathway is nucleotide-sugar biosynthesis; UDP-N-acetyl-alpha-D-glucosamine biosynthesis; alpha-D-glucosamine 6-phosphate from D-fructose 6-phosphate: step 1/1. Involved in amino sugar synthesis (formation of chitin, supplies the amino sugars of asparagine-linked oligosaccharides of glycoproteins). The sequence is that of Probable glutamine--fructose-6-phosphate aminotransferase [isomerizing] from Schizosaccharomyces pombe (strain 972 / ATCC 24843) (Fission yeast).